A 232-amino-acid chain; its full sequence is Ubiquinone biosynthesis O-methyltransferase (232 aa).

4 residues coordinate S-adenosyl-L-methionine: Arg36, Gly55, Asp76, and Leu120.

This sequence belongs to the methyltransferase superfamily. UbiG/COQ3 family.

It carries out the reaction a 3-demethylubiquinol + S-adenosyl-L-methionine = a ubiquinol + S-adenosyl-L-homocysteine + H(+). The catalysed reaction is a 3-(all-trans-polyprenyl)benzene-1,2-diol + S-adenosyl-L-methionine = a 2-methoxy-6-(all-trans-polyprenyl)phenol + S-adenosyl-L-homocysteine + H(+). Its pathway is cofactor biosynthesis; ubiquinone biosynthesis. Its function is as follows. O-methyltransferase that catalyzes the 2 O-methylation steps in the ubiquinone biosynthetic pathway. This chain is Ubiquinone biosynthesis O-methyltransferase, found in Azotobacter vinelandii (strain DJ / ATCC BAA-1303).